Reading from the N-terminus, the 229-residue chain is Uracil-DNA glycosylase (229 aa).

D64 acts as the Proton acceptor in catalysis.

Belongs to the uracil-DNA glycosylase (UDG) superfamily. UNG family.

The protein resides in the cytoplasm. It carries out the reaction Hydrolyzes single-stranded DNA or mismatched double-stranded DNA and polynucleotides, releasing free uracil.. Its function is as follows. Excises uracil residues from the DNA which can arise as a result of misincorporation of dUMP residues by DNA polymerase or due to deamination of cytosine. In Escherichia coli O7:K1 (strain IAI39 / ExPEC), this protein is Uracil-DNA glycosylase.